The chain runs to 496 residues: MAKLLALSLSFCFLLFGTCFALRDQPQQNECQLEHLNALKPDNRIKSEGGLIETWNPSNKQFACAGVALSRATLQPNSLLQTFLHQRSPEIFIQQGNGYFGMVFPGCVETFEEPRESEQGEGSKFSDSHQKVNRFREGDIIAVPTGVVFWMFNDQDTPVIAVSLIDTSSFQNQLDQMPRRFYLAGNHEQEFLRYQQEGSEEEENEGGNIFSGFKRDFLEDALNVNRRIVNKLQGRNEDEEKGAIVKVKGGLSITTPPEKEPRQKRGSRQEEDEDEDEKRQPHRHSRQDEDEDEKRQPHHHSRGGSKSQRDNGFEETICTARLHQNIGSSSSPDIYNPQAGRIKTVTSFDLQALRFLKLSAEFGSLHKNAMFVPHYNLNANSILYALKGRARLLYALNCKGNSVFDGELEAGRALIVPQNFAIAAKSLSDRFSYVAFKTNDRALINVCQKKLLQLLSIWKEMRPGSSSSTAPFHFLFHPAVTQTTKQQLDLVPNQYE.

Positions 1–21 (MAKLLALSLSFCFLLFGTCFA) are cleaved as a signal peptide. Disulfide bonds link cysteine 31-cysteine 64 and cysteine 107-cysteine 318. In terms of domain architecture, Cupin type-1 1 spans 36-230 (LNALKPDNRI…ALNVNRRIVN (195 aa)). Residues 240–311 (EKGAIVKVKG…RGGSKSQRDN (72 aa)) form a disordered region. Positions 257–269 (PEKEPRQKRGSRQ) are enriched in basic and acidic residues. Positions 324-453 (QNIGSSSSPD…INVCQKKLLQ (130 aa)) constitute a Cupin type-1 2 domain.

The protein belongs to the 11S seed storage protein (globulins) family. As to quaternary structure, hexamer; each subunit is composed of an acidic and a basic chain derived from a single precursor and linked by a disulfide bond.

In terms of biological role, seed storage protein. Alpha-amylase inhibitor. The protein is Legumin of Cicer arietinum (Chickpea).